A 490-amino-acid chain; its full sequence is Kinetochore protein Nuf2 homolog (490 aa).

2 coiled-coil regions span residues 146-280 and 310-407; these read DRKF…KLEA and DLID…SETI. Disordered regions lie at residues 346–365 and 468–490; these read QSET…EERQ and IDAG…SVFK.

Belongs to the NUF2 family. Component of the NDC80 complex, which is composed of at least ndc-80 and him-10. The NDC80 complex interacts with knl-1.

Its subcellular location is the nucleus. The protein resides in the chromosome. It localises to the centromere. It is found in the kinetochore. In terms of biological role, acts as a component of the essential kinetochore-associated NDC80 complex, which is required for chromosome segregation in mitosis and meiosis and spindle checkpoint activity. The ndc-80 complex synergistically enhances the affinity of the ska-1 complex for microtubules and may allow the ndc-80 complex to track depolymerizing microtubules. In Caenorhabditis elegans, this protein is Kinetochore protein Nuf2 homolog (him-10).